A 233-amino-acid polypeptide reads, in one-letter code: Cytochrome c biogenesis ATP-binding export protein CcmA (233 aa).

One can recognise an ABC transporter domain in the interval 17–233 (FAGEDLLCVR…AAGLFLEDEG (217 aa)). 49–56 (GPNGSGKS) serves as a coordination point for ATP.

The protein belongs to the ABC transporter superfamily. CcmA exporter (TC 3.A.1.107) family. In terms of assembly, the complex is composed of two ATP-binding proteins (CcmA) and two transmembrane proteins (CcmB).

The protein localises to the cell inner membrane. The catalysed reaction is heme b(in) + ATP + H2O = heme b(out) + ADP + phosphate + H(+). In terms of biological role, part of the ABC transporter complex CcmAB involved in the biogenesis of c-type cytochromes; once thought to export heme, this seems not to be the case, but its exact role is uncertain. Responsible for energy coupling to the transport system. The sequence is that of Cytochrome c biogenesis ATP-binding export protein CcmA from Rhodospirillum rubrum (strain ATCC 11170 / ATH 1.1.1 / DSM 467 / LMG 4362 / NCIMB 8255 / S1).